Here is a 258-residue protein sequence, read N- to C-terminus: tRNA pseudouridine synthase A (258 aa).

Residue D52 is the Nucleophile of the active site. Substrate is bound at residue Y110.

This sequence belongs to the tRNA pseudouridine synthase TruA family. As to quaternary structure, homodimer.

The enzyme catalyses uridine(38/39/40) in tRNA = pseudouridine(38/39/40) in tRNA. Functionally, formation of pseudouridine at positions 38, 39 and 40 in the anticodon stem and loop of transfer RNAs. The sequence is that of tRNA pseudouridine synthase A from Francisella philomiragia subsp. philomiragia (strain ATCC 25017 / CCUG 19701 / FSC 153 / O#319-036).